The chain runs to 352 residues: Ly6/PLAUR domain-containing protein 3 (352 aa).

An N-terminal signal peptide occupies residues 1 to 32; that stretch reads MDAARRGDTQPVMWTTRWLLLLPLLLCEGAQA. In terms of domain architecture, UPAR/Ly6 1 spans 35–128; it reads CYSCVQKADD…LNLTLRGLNP (94 aa). 4 N-linked (GlcNAc...) asparagine glycosylation sites follow: N120, N131, N178, and N185. One can recognise a UPAR/Ly6 2 domain in the interval 142-224; it reads CYSCMGLSRE…GSCCQGPRCN (83 aa). Over residues 236–249 the composition is skewed to pro residues; it reads RIPPLVLLPPPTTP. Positions 236–330 are disordered; the sequence is RIPPLVLLPP…KGGAQIPSKG (95 aa). A compositionally biased stretch (low complexity) spans 250-285; it reads APSTRTQNSSSTTSTTAPTTATTTIKPTTVQASHTS. 2 stretches are compositionally biased toward basic and acidic residues: residues 286 to 300 and 309 to 320; these read STHE…EEGS and HQDRSNMGKFPE. G330 carries the GPI-anchor amidated glycine lipid modification. Positions 331–352 are cleaved as a propeptide — removed in mature form; that stretch reads GSDALGSWLSAILLTVVAGAML.

In terms of assembly, interacts with AGR2 and AGR3. Binds laminin-1 and laminin-5. Interacts with LGALS3. Found predominantly on the basal layers of squamous epithelium. Expressed in the gravid uterus and on epithelial of the upper gastrointestinal tract. It has been found in tumor lines which metastasize via the lymphatic system.

The protein resides in the cell membrane. In terms of biological role, supports cell migration. May be involved in tumor progression. The polypeptide is Ly6/PLAUR domain-containing protein 3 (Lypd3) (Rattus norvegicus (Rat)).